The following is a 227-amino-acid chain: Cell wall mannoprotein CIS3 (227 aa).

The first 21 residues, 1 to 21 (MQFKNVALAASVAALSATASA), serve as a signal peptide directing secretion. The propeptide occupies 22–64 (EGYTPGEPWSTLTPTGSISCGAAEYTTTFGIAVQAITSSKAKR). Residues 65–78 (DVISQIGDGQVQAT) form a PIR1/2/3 repeat. S68 carries O-linked (Man) serine glycosylation. Residue T78 is glycosylated (O-linked (Man) threonine). Over residues 83 to 124 (AQATDSQAQATTTATPTSSEKISSSASKTSTNATSSSCATPS) the composition is skewed to low complexity. The disordered stretch occupies residues 83–127 (AQATDSQAQATTTATPTSSEKISSSASKTSTNATSSSCATPSLKD). Residues S105, S106, S107, and S109 are each glycosylated (O-linked (Man) serine). O-linked (Man) threonine glycosylation is present at T111. S112 carries O-linked (Man) serine glycosylation. T113 carries O-linked (Man) threonine glycosylation. An N-linked (GlcNAc...) asparagine glycan is attached at N114. T116 carries an O-linked (Man) threonine glycan. O-linked (Man) serine glycosylation is found at S117 and S118.

It belongs to the PIR protein family. In terms of processing, covalently linked to beta-1,3-glucan of the inner cell wall layer via an alkali-sensitive ester linkage between the gamma-carboxyl group of glutamic acid, arising from Gln-74 within the PIR1/2/3 repeat, and hydroxyl groups of glucoses of beta-1,3-glucan chains. Post-translationally, extensively O-mannosylated. Also N-glycosylated.

The protein localises to the secreted. The protein resides in the cell wall. In terms of biological role, component of the outer cell wall layer. Required for stability of the cell wall and for optimal growth. Required for resistance against several antifungal and cell wall-perturbing agents. This chain is Cell wall mannoprotein CIS3 (CIS3), found in Saccharomyces cerevisiae (strain ATCC 204508 / S288c) (Baker's yeast).